Reading from the N-terminus, the 435-residue chain is Adenylosuccinate synthetase (435 aa).

GTP-binding positions include Gly11–Lys17 and Gly39–Thr41. The active-site Proton acceptor is Asp12. Mg(2+)-binding residues include Asp12 and Gly39. IMP contacts are provided by residues Asp12–Lys15, Asn37–His40, Thr128, Arg142, Gln223, Thr238, and Arg302. Residue His40 is the Proton donor of the active site. Ser298 to Arg304 contacts substrate. Residues Arg304, Lys330–Asp332, and Ser412–Gly414 contribute to the GTP site.

This sequence belongs to the adenylosuccinate synthetase family. Homodimer. It depends on Mg(2+) as a cofactor.

The protein localises to the cytoplasm. The enzyme catalyses IMP + L-aspartate + GTP = N(6)-(1,2-dicarboxyethyl)-AMP + GDP + phosphate + 2 H(+). It functions in the pathway purine metabolism; AMP biosynthesis via de novo pathway; AMP from IMP: step 1/2. In terms of biological role, plays an important role in the de novo pathway of purine nucleotide biosynthesis. Catalyzes the first committed step in the biosynthesis of AMP from IMP. The chain is Adenylosuccinate synthetase from Coxiella burnetii (strain RSA 331 / Henzerling II).